The sequence spans 270 residues: DNA repair protein RecO (270 aa).

Residues Pro-202–Ser-221 form a disordered region.

It belongs to the RecO family.

Functionally, involved in DNA repair and RecF pathway recombination. This Rhodopirellula baltica (strain DSM 10527 / NCIMB 13988 / SH1) protein is DNA repair protein RecO.